Consider the following 474-residue polypeptide: Glutathione synthetase (474 aa).

Arg125 serves as a coordination point for substrate. Glu144 provides a ligand contact to ATP. 2 residues coordinate Mg(2+): Glu144 and Asn146. Residues Ile148–Ser151, Gln214–Asn216, Gln220, and Arg267–Tyr270 each bind substrate. Residues Lys305, Lys364 to Asn373, Tyr375, Met398 to Ile401, and Glu425 contribute to the ATP site. A Mg(2+)-binding site is contributed by Glu368. A substrate-binding site is contributed by Arg450. Residues Lys452 and Asp458 each coordinate ATP. Position 461-462 (Val461–Ala462) interacts with substrate.

Belongs to the eukaryotic GSH synthase family. Homodimer. It depends on Mg(2+) as a cofactor. As to expression, expressed ubiquitously.

It catalyses the reaction gamma-L-glutamyl-L-cysteine + glycine + ATP = glutathione + ADP + phosphate + H(+). The catalysed reaction is gamma-L-glutamyl-(2S)-2-aminobutanoate + glycine + ATP = ophthalmate + ADP + phosphate + H(+). It participates in sulfur metabolism; glutathione biosynthesis; glutathione from L-cysteine and L-glutamate: step 2/2. Catalyzes the production of glutathione from gamma-glutamylcysteine and glycine in an ATP-dependent manner. Glutathione (gamma-glutamylcysteinylglycine, GSH) is the most abundant intracellular thiol in living aerobic cells and is required for numerous processes including the protection of cells against oxidative damage, amino acid transport, the detoxification of foreign compounds, the maintenance of protein sulfhydryl groups in a reduced state and acts as a cofactor for a number of enzymes. Participates in ophthalmate biosynthesis in hepatocytes. The sequence is that of Glutathione synthetase from Xenopus laevis (African clawed frog).